We begin with the raw amino-acid sequence, 87 residues long: Putative sodium channel toxin Ts38 (87 aa).

Residues 1–22 form the signal peptide; it reads MKHLKFYSILFLFSIFVYKVNA. Disulfide bonds link cysteine 42-cysteine 65, cysteine 51-cysteine 72, and cysteine 55-cysteine 74.

The protein belongs to the long (3 C-C) scorpion toxin superfamily. Sodium channel inhibitor family. In terms of tissue distribution, expressed by the venom gland.

It is found in the secreted. Its function is as follows. Putative sodium channel toxin. The chain is Putative sodium channel toxin Ts38 from Tityus serrulatus (Brazilian scorpion).